The primary structure comprises 412 residues: Branched-chain alpha-ketoacid dehydrogenase kinase (412 aa).

A mitochondrion-targeting transit peptide spans 1–30; that stretch reads MILASVLRSGPGGGLPLRPLLGPALALRAR. The residue at position 31 (serine 31) is a Phosphoserine. Phosphoserine; by autocatalysis is present on serine 52. A Histidine kinase domain is found at 159–404; sequence LDDHKDVVTL…DVYLRLRHID (246 aa). Residues lysine 192 and lysine 233 each carry the N6-acetyllysine modification. Residues asparagine 279 and aspartate 315 each contribute to the ATP site. Asparagine 279 is a Mg(2+) binding site. Positions 328, 330, and 333 each coordinate K(+). 2 residues coordinate ATP: threonine 334 and threonine 335. Phosphoserine occurs at positions 356 and 360. ATP contacts are provided by histidine 364, glycine 367, and leucine 370. Glycine 367 contacts K(+).

The protein belongs to the PDK/BCKDK protein kinase family. In terms of assembly, homodimer. Homotetramer. Dimerizes through interaction of two opposing nucleotide-binding domains. Interacts with E2 component of the branched-chain alpha-ketoacid dehydrogenase (BCKDH) complex. Competes with BCKDK for binding to the E2 component; this interaction is modulated by branched-chain alpha-keto acids. At steady state, BCKDH holoenzyme contains BCKDK and BCKDHA is phosphorylated. In response to high levels of branched-chain alpha-keto acids, the inhibitory BCKDK is replaced by activating PPM1K leading to BCKDHA dephosphorylation and BCAA degradation. Autophosphorylated. As to expression, ubiquitous.

It is found in the mitochondrion matrix. The enzyme catalyses L-seryl-[3-methyl-2-oxobutanoate dehydrogenase] + ATP = O-phospho-L-seryl-[3-methyl-2-oxobutanoate dehydrogenase] + ADP + H(+). It catalyses the reaction L-seryl-[protein] + ATP = O-phospho-L-seryl-[protein] + ADP + H(+). It functions in the pathway protein modification. Allosterically inhibited by certain thiazoles and thiophenes: thiazoles increase interaction with DBT/BCKDH-E2, whereas thiophenes reduce this interaction. Inhibited by 3,6- dichlorobenzo[b]thiophene-2-carboxylic acid (BT2). The ATP binding is mediated by both potassium and magnesium ions. Serine/threonine-protein kinase component of macronutrients metabolism. Forms a functional kinase and phosphatase pair with PPM1K, serving as a metabolic regulatory node that coordinates branched-chain amino acids (BCAAs) with glucose and lipid metabolism via two distinct phosphoprotein targets: mitochondrial BCKDHA subunit of the branched-chain alpha-ketoacid dehydrogenase (BCKDH) complex and cytosolic ACLY, a lipogenic enzyme of Krebs cycle. Phosphorylates and inactivates mitochondrial BCKDH complex a multisubunit complex consisting of three multimeric components each involved in different steps of BCAA catabolism: E1 composed of BCKDHA and BCKDHB, E2 core composed of DBT monomers, and E3 composed of DLD monomers. Associates with the E2 component of BCKDH complex and phosphorylates BCKDHA on Ser-337, leading to conformational changes that interrupt substrate channeling between E1 and E2 and inactivates the BCKDH complex. Phosphorylates ACLY on Ser-455 in response to changes in cellular carbohydrate abundance such as occurs during fasting to feeding metabolic transition. Refeeding stimulates MLXIPL/ChREBP transcription factor, leading to increased BCKDK to PPM1K expression ratio, phosphorylation and activation of ACLY that ultimately results in the generation of malonyl-CoA and oxaloacetate immediate substrates of de novo lipogenesis and glucogenesis, respectively. Recognizes phosphosites having SxxE/D canonical motif. This chain is Branched-chain alpha-ketoacid dehydrogenase kinase, found in Homo sapiens (Human).